Here is a 161-residue protein sequence, read N- to C-terminus: Small heat shock protein ibp (161 aa).

Positions 35-150 constitute a sHSP domain; it reads EKPLSDTPAY…KPKKIFINIP (116 aa).

The protein belongs to the small heat shock protein (HSP20) family.

This chain is Small heat shock protein ibp (ibp), found in Buchnera aphidicola subsp. Schizaphis graminum (strain Sg).